A 387-amino-acid chain; its full sequence is Methylthioribose-1-phosphate isomerase (387 aa).

Residue aspartate 257 is the Proton donor of the active site.

Belongs to the eIF-2B alpha/beta/delta subunits family. MtnA subfamily.

It localises to the cytoplasm. The protein resides in the nucleus. The enzyme catalyses 5-(methylsulfanyl)-alpha-D-ribose 1-phosphate = 5-(methylsulfanyl)-D-ribulose 1-phosphate. It participates in amino-acid biosynthesis; L-methionine biosynthesis via salvage pathway; L-methionine from S-methyl-5-thio-alpha-D-ribose 1-phosphate: step 1/6. In terms of biological role, catalyzes the interconversion of methylthioribose-1-phosphate (MTR-1-P) into methylthioribulose-1-phosphate (MTRu-1-P). The polypeptide is Methylthioribose-1-phosphate isomerase (mri1) (Neosartorya fischeri (strain ATCC 1020 / DSM 3700 / CBS 544.65 / FGSC A1164 / JCM 1740 / NRRL 181 / WB 181) (Aspergillus fischerianus)).